Consider the following 217-residue polypeptide: ATP phosphoribosyltransferase (217 aa).

This sequence belongs to the ATP phosphoribosyltransferase family. Short subfamily. In terms of assembly, heteromultimer composed of HisG and HisZ subunits.

It localises to the cytoplasm. The catalysed reaction is 1-(5-phospho-beta-D-ribosyl)-ATP + diphosphate = 5-phospho-alpha-D-ribose 1-diphosphate + ATP. It participates in amino-acid biosynthesis; L-histidine biosynthesis; L-histidine from 5-phospho-alpha-D-ribose 1-diphosphate: step 1/9. Functionally, catalyzes the condensation of ATP and 5-phosphoribose 1-diphosphate to form N'-(5'-phosphoribosyl)-ATP (PR-ATP). Has a crucial role in the pathway because the rate of histidine biosynthesis seems to be controlled primarily by regulation of HisG enzymatic activity. This chain is ATP phosphoribosyltransferase, found in Polaromonas naphthalenivorans (strain CJ2).